Consider the following 312-residue polypeptide: Acetyl-coenzyme A carboxylase carboxyl transferase subunit alpha (312 aa).

The CoA carboxyltransferase C-terminal domain maps to 32–286 (LLEERLARLR…KEALLKALEE (255 aa)).

The protein belongs to the AccA family. As to quaternary structure, acetyl-CoA carboxylase is a heterohexamer composed of biotin carboxyl carrier protein (AccB), biotin carboxylase (AccC) and two subunits each of ACCase subunit alpha (AccA) and ACCase subunit beta (AccD).

The protein resides in the cytoplasm. It catalyses the reaction N(6)-carboxybiotinyl-L-lysyl-[protein] + acetyl-CoA = N(6)-biotinyl-L-lysyl-[protein] + malonyl-CoA. Its pathway is lipid metabolism; malonyl-CoA biosynthesis; malonyl-CoA from acetyl-CoA: step 1/1. Its function is as follows. Component of the acetyl coenzyme A carboxylase (ACC) complex. First, biotin carboxylase catalyzes the carboxylation of biotin on its carrier protein (BCCP) and then the CO(2) group is transferred by the carboxyltransferase to acetyl-CoA to form malonyl-CoA. In Thermus thermophilus (strain ATCC BAA-163 / DSM 7039 / HB27), this protein is Acetyl-coenzyme A carboxylase carboxyl transferase subunit alpha.